The chain runs to 362 residues: UPF0283 membrane protein Arad_2632 (362 aa).

The segment covering 1–11 has biased composition (basic and acidic residues); sequence MTKPTEDDPKG. The tract at residues 1–47 is disordered; that stretch reads MTKPTEDDPKGISRRPAAFSLEQEASREGAHTKTTAETPRRKPQSFD. 2 helical membrane-spanning segments follow: residues 82 to 102 and 118 to 138; these read FSFG…AFGL and LGYT…AIVV.

It belongs to the UPF0283 family.

Its subcellular location is the cell inner membrane. The sequence is that of UPF0283 membrane protein Arad_2632 from Rhizobium rhizogenes (strain K84 / ATCC BAA-868) (Agrobacterium radiobacter).